Consider the following 297-residue polypeptide: UTP--glucose-1-phosphate uridylyltransferase (297 aa).

Belongs to the UDPGP type 2 family.

The catalysed reaction is alpha-D-glucose 1-phosphate + UTP + H(+) = UDP-alpha-D-glucose + diphosphate. It functions in the pathway carbohydrate metabolism; nucleotide-sugar metabolism. Its pathway is bacterial outer membrane biogenesis; lipopolysaccharide biosynthesis. May play a role in stationary phase survival. This Salmonella typhimurium (strain LT2 / SGSC1412 / ATCC 700720) protein is UTP--glucose-1-phosphate uridylyltransferase (galF).